The primary structure comprises 90 residues: Small ribosomal subunit protein bS16 (90 aa).

This sequence belongs to the bacterial ribosomal protein bS16 family.

In Bacillus cytotoxicus (strain DSM 22905 / CIP 110041 / 391-98 / NVH 391-98), this protein is Small ribosomal subunit protein bS16.